Reading from the N-terminus, the 207-residue chain is Small ribosomal subunit protein uS4 (207 aa).

A disordered region spans residues 33-54; it reads KLDSKPGQHGRTSGARTSDYGN. Polar residues predominate over residues 42–53; the sequence is GRTSGARTSDYG. Residues 97–157 form the S4 RNA-binding domain; sequence SRLDNVVYRM…EKSKKQVRIA (61 aa).

This sequence belongs to the universal ribosomal protein uS4 family. Part of the 30S ribosomal subunit. Contacts protein S5. The interaction surface between S4 and S5 is involved in control of translational fidelity.

Its function is as follows. One of the primary rRNA binding proteins, it binds directly to 16S rRNA where it nucleates assembly of the body of the 30S subunit. Functionally, with S5 and S12 plays an important role in translational accuracy. The polypeptide is Small ribosomal subunit protein uS4 (Ralstonia pickettii (strain 12J)).